A 352-amino-acid polypeptide reads, in one-letter code: Replication factor C subunit 5 (352 aa).

The protein belongs to the activator 1 small subunits family. As to quaternary structure, heteropentamer of subunits rfc1, rfc2, rfc3, rfc4 and rfc5 that forms a complex with PCNA in the presence of ATP.

It is found in the nucleus. Its function is as follows. The elongation of primed DNA templates by DNA polymerase delta and epsilon requires the action of the accessory proteins proliferating cell nuclear antigen (PCNA) and activator 1. This Neurospora crassa (strain ATCC 24698 / 74-OR23-1A / CBS 708.71 / DSM 1257 / FGSC 987) protein is Replication factor C subunit 5.